Here is a 409-residue protein sequence, read N- to C-terminus: Arginine deiminase (409 aa).

The active-site Amidino-cysteine intermediate is Cys399.

This sequence belongs to the arginine deiminase family.

The protein localises to the cytoplasm. The catalysed reaction is L-arginine + H2O = L-citrulline + NH4(+). Its pathway is amino-acid degradation; L-arginine degradation via ADI pathway; carbamoyl phosphate from L-arginine: step 1/2. The chain is Arginine deiminase from Streptococcus sanguinis (strain SK36).